We begin with the raw amino-acid sequence, 758 residues long: Catalase-peroxidase (758 aa).

Residues 1 to 10 (MSDTQDNAPV) are compositionally biased toward polar residues. The tract at residues 1-57 (MSDTQDNAPVSAQGVDQKAAAGCPVAHDSVTAHGSESESPAIDSPSAVGGGRPRTNR) is disordered. The tryptophyl-tyrosyl-methioninium (Trp-Tyr) (with M-276) cross-link spans 128 to 250 (WHAAGTYRIH…VGATEMGLIY (123 aa)). The Proton acceptor role is filled by His-129. A cross-link (tryptophyl-tyrosyl-methioninium (Tyr-Met) (with W-128)) is located at residues 250–276 (YVNPEGPRGNADPASAAHFIRETFRRM). His-291 provides a ligand contact to heme b.

It belongs to the peroxidase family. Peroxidase/catalase subfamily. Homodimer or homotetramer. It depends on heme b as a cofactor. Post-translationally, formation of the three residue Trp-Tyr-Met cross-link is important for the catalase, but not the peroxidase activity of the enzyme.

It catalyses the reaction H2O2 + AH2 = A + 2 H2O. It carries out the reaction 2 H2O2 = O2 + 2 H2O. Functionally, bifunctional enzyme with both catalase and broad-spectrum peroxidase activity. The chain is Catalase-peroxidase from Salinispora tropica (strain ATCC BAA-916 / DSM 44818 / JCM 13857 / NBRC 105044 / CNB-440).